A 189-amino-acid polypeptide reads, in one-letter code: Peptidyl-tRNA hydrolase (189 aa).

Y14 is a tRNA binding site. The active-site Proton acceptor is H19. The tRNA site is built by Y64, N66, and N112.

It belongs to the PTH family. As to quaternary structure, monomer.

The protein resides in the cytoplasm. It carries out the reaction an N-acyl-L-alpha-aminoacyl-tRNA + H2O = an N-acyl-L-amino acid + a tRNA + H(+). Functionally, hydrolyzes ribosome-free peptidyl-tRNAs (with 1 or more amino acids incorporated), which drop off the ribosome during protein synthesis, or as a result of ribosome stalling. Catalyzes the release of premature peptidyl moieties from peptidyl-tRNA molecules trapped in stalled 50S ribosomal subunits, and thus maintains levels of free tRNAs and 50S ribosomes. The polypeptide is Peptidyl-tRNA hydrolase (Dehalococcoides mccartyi (strain CBDB1)).